The primary structure comprises 177 residues: ATP synthase subunit delta (177 aa).

It belongs to the ATPase delta chain family. In terms of assembly, F-type ATPases have 2 components, F(1) - the catalytic core - and F(0) - the membrane proton channel. F(1) has five subunits: alpha(3), beta(3), gamma(1), delta(1), epsilon(1). F(0) has three main subunits: a(1), b(2) and c(10-14). The alpha and beta chains form an alternating ring which encloses part of the gamma chain. F(1) is attached to F(0) by a central stalk formed by the gamma and epsilon chains, while a peripheral stalk is formed by the delta and b chains.

The protein resides in the cell inner membrane. F(1)F(0) ATP synthase produces ATP from ADP in the presence of a proton or sodium gradient. F-type ATPases consist of two structural domains, F(1) containing the extramembraneous catalytic core and F(0) containing the membrane proton channel, linked together by a central stalk and a peripheral stalk. During catalysis, ATP synthesis in the catalytic domain of F(1) is coupled via a rotary mechanism of the central stalk subunits to proton translocation. Functionally, this protein is part of the stalk that links CF(0) to CF(1). It either transmits conformational changes from CF(0) to CF(1) or is implicated in proton conduction. This chain is ATP synthase subunit delta, found in Shewanella piezotolerans (strain WP3 / JCM 13877).